The primary structure comprises 1113 residues: Poly(A) RNA polymerase gld-2 (1113 aa).

Disordered stretches follow at residues 1–113 (MVMA…PKYH), 134–175 (RPIF…PTQP), 205–266 (LYRS…GQDP), and 445–513 (LDDE…DEST). The span at 22-52 (SPSVDSVSRVQQQSGGFAFYNQQSNHQYQQS) shows a compositional bias: low complexity. Residues 60–106 (SRDGNTGYYNNHSGNKRQTYNNQRGGRSYNHRGNSNYQQNGEYSGNQ) show a composition bias toward polar residues. A compositionally biased stretch (low complexity) spans 149–172 (RRSSPPSPSALSSSTANSTSNRAP). Residues 223–233 (YKQPPPQPPST) show a composition bias toward pro residues. Residues 451–485 (GADHDKTIDENRRRIHKSQEPRIGTEEKALNELPR) are compositionally biased toward basic and acidic residues. Residues 492-507 (SSCSSISSVSESSSPS) are compositionally biased toward low complexity. The Mg(2+) site is built by aspartate 606 and aspartate 608. The PAP-associated domain occupies 780–816 (TLGELLIGFLDYYANEFNYDRDAISIRQGRRVERAAL). 2 disordered regions span residues 817–854 (AVRP…GIPM) and 966–1113 (GPGH…NVSQ). Over residues 972–994 (YQQQSNQNLSRPQRPGSNQGYQM) the composition is skewed to polar residues. Low complexity-rich tracts occupy residues 995–1035 (NNNR…SRSN) and 1044–1061 (QQNS…KENV). A compositionally biased stretch (basic and acidic residues) spans 1069-1084 (VDKKQQNSNRKDDGNR).

It belongs to the DNA polymerase type-B-like family. GLD2 subfamily. As to quaternary structure, interacts with gld-3. Requires Mg(2+) as cofactor. It depends on Mn(2+) as a cofactor. Germline-specific.

It is found in the cytoplasm. It catalyses the reaction RNA(n) + ATP = RNA(n)-3'-adenine ribonucleotide + diphosphate. Cytoplasmic poly(A) RNA polymerase that adds successive AMP monomers to the 3'-end of specific RNAs, forming a poly(A) tail. Acts as a regulator of mitosis/meiosis required for progression through meiotic prophase during oogenesis and spermatogenesis and for promotion of the entry into meiosis from the mitotic cell cycle. May act by regulating and activating gld-1 mRNA activity in germline. Required for polyadenylation of neg-1 mRNA during embryogenesis. This chain is Poly(A) RNA polymerase gld-2 (gld-2), found in Caenorhabditis elegans.